Consider the following 152-residue polypeptide: Ribosome maturation factor RimP (152 aa).

Belongs to the RimP family.

The protein localises to the cytoplasm. In terms of biological role, required for maturation of 30S ribosomal subunits. The protein is Ribosome maturation factor RimP of Pseudomonas aeruginosa (strain LESB58).